A 229-amino-acid polypeptide reads, in one-letter code: Urease accessory protein UreF (229 aa).

This sequence belongs to the UreF family. UreD, UreF and UreG form a complex that acts as a GTP-hydrolysis-dependent molecular chaperone, activating the urease apoprotein by helping to assemble the nickel containing metallocenter of UreC. The UreE protein probably delivers the nickel.

The protein localises to the cytoplasm. Required for maturation of urease via the functional incorporation of the urease nickel metallocenter. This is Urease accessory protein UreF from Staphylococcus epidermidis (strain ATCC 12228 / FDA PCI 1200).